Here is a 158-residue protein sequence, read N- to C-terminus: SsrA-binding protein (158 aa).

The protein belongs to the SmpB family.

The protein resides in the cytoplasm. Functionally, required for rescue of stalled ribosomes mediated by trans-translation. Binds to transfer-messenger RNA (tmRNA), required for stable association of tmRNA with ribosomes. tmRNA and SmpB together mimic tRNA shape, replacing the anticodon stem-loop with SmpB. tmRNA is encoded by the ssrA gene; the 2 termini fold to resemble tRNA(Ala) and it encodes a 'tag peptide', a short internal open reading frame. During trans-translation Ala-aminoacylated tmRNA acts like a tRNA, entering the A-site of stalled ribosomes, displacing the stalled mRNA. The ribosome then switches to translate the ORF on the tmRNA; the nascent peptide is terminated with the 'tag peptide' encoded by the tmRNA and targeted for degradation. The ribosome is freed to recommence translation, which seems to be the essential function of trans-translation. In Bartonella quintana (strain Toulouse) (Rochalimaea quintana), this protein is SsrA-binding protein.